The primary structure comprises 124 residues: Large ribosomal subunit protein bL19 (124 aa).

It belongs to the bacterial ribosomal protein bL19 family.

This protein is located at the 30S-50S ribosomal subunit interface and may play a role in the structure and function of the aminoacyl-tRNA binding site. The sequence is that of Large ribosomal subunit protein bL19 from Acidiphilium cryptum (strain JF-5).